The sequence spans 84 residues: Glutaredoxin (84 aa).

Positions 1 to 84 (MPPVVIYTTA…AGKLDALLSA (84 aa)) constitute a Glutaredoxin domain. Cys-12 and Cys-15 form a disulfide bridge.

This sequence belongs to the glutaredoxin family. In terms of assembly, monomer.

Its subcellular location is the cytoplasm. Has a glutathione-disulfide oxidoreductase activity in the presence of NADPH and glutathione reductase. Reduces low molecular weight disulfides and proteins. This Pseudomonas aeruginosa (strain ATCC 15692 / DSM 22644 / CIP 104116 / JCM 14847 / LMG 12228 / 1C / PRS 101 / PAO1) protein is Glutaredoxin (grx).